The primary structure comprises 142 residues: Alpha-lactalbumin (142 aa).

A signal peptide spans 1–19 (MRFFVPLFLVGILFPAILA). One can recognise a C-type lysozyme domain in the interval 20 to 142 (KQFTKCELSQ…KLEQWLCEKL (123 aa)). 4 disulfides stabilise this stretch: Cys-25/Cys-139, Cys-47/Cys-130, Cys-80/Cys-96, and Cys-92/Cys-110. The Ca(2+) site is built by Thr-57 and Gln-58. Asn-64 is a glycosylation site (N-linked (GlcNAc...) asparagine). Glu-68 lines the Zn(2+) pocket. Asn-90 carries N-linked (GlcNAc...) asparagine; atypical; partial glycosylation. The Ca(2+) site is built by Lys-98, Leu-100, Asp-101, Asp-102, Asp-103, Asp-106, and Asp-107. Glu-135 provides a ligand contact to Zn(2+).

This sequence belongs to the glycosyl hydrolase 22 family. As to quaternary structure, lactose synthase (LS) is a heterodimer of a catalytic component, beta1,4-galactosyltransferase (beta4Gal-T1) and a regulatory component, alpha-lactalbumin (LA). As to expression, mammary gland specific. Secreted in milk.

The protein resides in the secreted. In terms of biological role, regulatory subunit of lactose synthase, changes the substrate specificity of galactosyltransferase in the mammary gland making glucose a good acceptor substrate for this enzyme. This enables LS to synthesize lactose, the major carbohydrate component of milk. In other tissues, galactosyltransferase transfers galactose onto the N-acetylglucosamine of the oligosaccharide chains in glycoproteins. This Homo sapiens (Human) protein is Alpha-lactalbumin (LALBA).